A 434-amino-acid polypeptide reads, in one-letter code: CCA tRNA nucleotidyltransferase 1, mitochondrial (434 aa).

Residues 1 to 41 (MLRCLYHWHRPVLNRRWSRLCLPKQYLFTMKLQSPEFQSLF) constitute a mitochondrion transit peptide. Residues Gly-64 and Arg-67 each contribute to the ATP site. 2 residues coordinate CTP: Gly-64 and Arg-67. Mg(2+)-binding residues include Asp-77 and Asp-79. The ATP site is built by Arg-151, Asp-194, Arg-197, Arg-200, and Arg-203. Arg-151, Asp-194, Arg-197, Arg-200, and Arg-203 together coordinate CTP. Ser-400 is subject to Phosphoserine. The residue at position 402 (Lys-402) is an N6-acetyllysine.

It belongs to the tRNA nucleotidyltransferase/poly(A) polymerase family. Monomer, and homodimer; disulfide-linked. It depends on Mg(2+) as a cofactor.

The protein resides in the mitochondrion. The protein localises to the cytoplasm. It localises to the nucleus. The catalysed reaction is a tRNA precursor + 2 CTP + ATP = a tRNA with a 3' CCA end + 3 diphosphate. It carries out the reaction a tRNA with a 3' CCA end + 2 CTP + ATP = a tRNA with a 3' CCACCA end + 3 diphosphate. In terms of biological role, nucleotidyltransferase that catalyzes the addition and repair of the essential 3'-terminal CCA sequence in tRNAs, which is necessary for the attachment of amino acids to the 3' terminus of tRNA molecules, using CTP and ATP as substrates. tRNA 3'-terminal CCA addition is required both for tRNA processing and repair. Promotes tRNA repair and recycling downstream of the ribosome-associated quality control (RQC) pathway by mediating addition of the tRNA 3'-terminal CCA following cleavage by ANKZF1 and repair by ELAC1. Also involved in tRNA surveillance by mediating tandem CCA addition to generate a CCACCA at the 3' terminus of unstable tRNAs and tRNA-like transcripts. While stable tRNAs receive only 3'-terminal CCA, unstable tRNAs beginning with GG are marked with CCACCA and rapidly degraded. The structural flexibility of RNA controls the choice between CCA versus CCACCA addition: following the first CCA addition cycle, nucleotide-binding to the active site triggers a clockwise screw motion, producing torque on the RNA. This ejects stable RNAs, whereas unstable RNAs are refolded while bound to the enzyme and subjected to a second CCA catalytic cycle. Adds 2 C residues (CC-) to the 3' terminus of tRNA molecules instead of a complete CCA end as isoform 1 does (in vitro). This Homo sapiens (Human) protein is CCA tRNA nucleotidyltransferase 1, mitochondrial.